The primary structure comprises 319 residues: L-lactate dehydrogenase (319 aa).

NAD(+)-binding positions include V17, D38, K43, Y69, and 83–84 (GA). Substrate is bound by residues Q86 and R92. Residues T105, 122-124 (ATN), and S147 contribute to the NAD(+) site. Position 124–127 (124–127 (NPVD)) interacts with substrate. Residue 152-155 (DTAR) participates in substrate binding. Beta-D-fructose 1,6-bisphosphate-binding residues include R157 and H172. H179 (proton acceptor) is an active-site residue. A Phosphotyrosine modification is found at Y224. T233 serves as a coordination point for substrate.

It belongs to the LDH/MDH superfamily. LDH family. As to quaternary structure, homotetramer.

It localises to the cytoplasm. The enzyme catalyses (S)-lactate + NAD(+) = pyruvate + NADH + H(+). It participates in fermentation; pyruvate fermentation to lactate; (S)-lactate from pyruvate: step 1/1. Allosterically activated by fructose 1,6-bisphosphate (FBP). Its function is as follows. Catalyzes the conversion of lactate to pyruvate. The protein is L-lactate dehydrogenase of Geobacillus sp. (strain WCH70).